Consider the following 181-residue polypeptide: Sodium/potassium-transporting ATPase subunit beta-1-interacting protein 3 (181 aa).

4 consecutive transmembrane segments (helical) span residues 2-22 (GCCT…LSAL), 35-55 (APIL…FGTI), 62-82 (IMVY…IICF), and 152-172 (VQIL…SISM).

The protein belongs to the NKAIN family. As to quaternary structure, interacts with ATP1B1. Detected in the brain only and specifically in neurons. Expressed in multiple regions such as cerebral cortex, thalamus, hippocampus, olfactory bulb and brainstem as well as in cerebellum with low expression in granular cell layer.

The protein localises to the cell membrane. In Mus musculus (Mouse), this protein is Sodium/potassium-transporting ATPase subunit beta-1-interacting protein 3 (Nkain3).